The primary structure comprises 890 residues: MALRRSMGRPGLPPLPLPPPPRLGLLLAALASLLLPESAAAGLKLMGAPVKLTVSQGQPVKLNCSVEGMEEPDIQWVKDGAVVQNLDQLYIPVSEQHWIGFLSLKSVERSDAGRYWCQVEDGGETEISQPVWLTVEGVPFFTVEPKDLAVPPNAPFQLSCEAVGPPEPVTIVWWRGTTKIGGPAPSPSVLNVTGVTQSTMFSCEAHNLKGLASSRTATVHLQALPAAPFNITVTKLSSSNASVAWMPGADGRALLQSCTVQVTQAPGGWEVLAVVVPVPPFTCLLRDLVPATNYSLRVRCANALGPSPYADWVPFQTKGLAPASAPQNLHAIRTDSGLILEWEEVIPEAPLEGPLGPYKLSWVQDNGTQDELTVEGTRANLTGWDPQKDLIVRVCVSNAVGCGPWSQPLVVSSHDRAGQQGPPHSRTSWVPVVLGVLTALVTAAALALILLRKRRKETRFGQAFDSVMARGEPAVHFRAARSFNRERPERIEATLDSLGISDELKEKLEDVLIPEQQFTLGRMLGKGEFGSVREAQLKQEDGSFVKVAVKMLKADIIASSDIEEFLREAACMKEFDHPHVAKLVGVSLRSRAKGRLPIPMVILPFMKHGDLHAFLLASRIGENPFNLPLQTLIRFMVDIACGMEYLSSRNFIHRDLAARNCMLAEDMTVCVADFGLSRKIYSGDYYRQGCASKLPVKWLALESLADNLYTVQSDVWAFGVTMWEIMTRGQTPYAGIENAEIYNYLIGGNRLKQPPECMEDVYDLMYQCWSADPKQRPSFTCLRMELENILGQLSVLSASQDPLYINIERAEEPTAGGSLELPGRDQPYSGAGDGSGMGAVGGTPSDCRYILTPGGLAEQPGQAEHQPESPLNETQRLLLLQQGLLPHSSC.

An N-terminal signal peptide occupies residues 1–40; sequence MALRRSMGRPGLPPLPLPPPPRLGLLLAALASLLLPESAA. Ig-like C2-type domains lie at 41-128 and 139-220; these read AGLK…TEIS and PFFT…ATVH. The Extracellular portion of the chain corresponds to 41 to 429; it reads AGLKLMGAPV…QGPPHSRTSW (389 aa). N-linked (GlcNAc...) asparagine glycosylation is present at Asn63. Cystine bridges form between Cys64–Cys117 and Cys160–Cys203. N-linked (GlcNAc...) asparagine glycans are attached at residues Asn191, Asn230, Asn240, Asn293, Asn366, and Asn380. Fibronectin type-III domains follow at residues 227–320 and 325–416; these read APFN…TKGL and APQN…SHDR. Residues 430–450 form a helical membrane-spanning segment; sequence VPVVLGVLTALVTAAALALIL. At 451–890 the chain is on the cytoplasmic side; the sequence is LRKRRKETRF…QQGLLPHSSC (440 aa). Position 466 is a phosphoserine (Ser466). A Protein kinase domain is found at 518–790; it reads FTLGRMLGKG…CLRMELENIL (273 aa). ATP contacts are provided by residues 524-532 and Lys550; that span reads LGKGEFGSV. Residue Asp655 is the Proton acceptor of the active site. Tyr681, Tyr685, Tyr686, and Tyr804 each carry phosphotyrosine; by autocatalysis. Disordered regions lie at residues 815-837 and 851-871; these read AGGSLELPGRDQPYSGAGDGSGM and LTPGGLAEQPGQAEHQPESPL. A phosphoserine mark is found at Ser818 and Ser869.

It belongs to the protein kinase superfamily. Tyr protein kinase family. AXL/UFO subfamily. Monomer and homodimer. Interacts (via N-terminus) with extracellular ligands TULP1 and GAS6. Interacts with PIK3R1; this interaction increases PI3-kinase activity. Post-translationally, autophosphorylated. In terms of tissue distribution, abundant in the brain and lower levels in other tissues.

It is found in the cell membrane. The catalysed reaction is L-tyrosyl-[protein] + ATP = O-phospho-L-tyrosyl-[protein] + ADP + H(+). Functionally, receptor tyrosine kinase that transduces signals from the extracellular matrix into the cytoplasm by binding to several ligands including TULP1 or GAS6. Regulates many physiological processes including cell survival, migration and differentiation. Ligand binding at the cell surface induces dimerization and autophosphorylation of TYRO3 on its intracellular domain that provides docking sites for downstream signaling molecules. Following activation by ligand, interacts with PIK3R1 and thereby enhances PI3-kinase activity. Activates the AKT survival pathway, including nuclear translocation of NF-kappa-B and up-regulation of transcription of NF-kappa-B-regulated genes. TYRO3 signaling plays a role in various processes such as neuron protection from excitotoxic injury, platelet aggregation and cytoskeleton reorganization. Also plays an important role in inhibition of Toll-like receptors (TLRs)-mediated innate immune response by activating STAT1, which selectively induces production of suppressors of cytokine signaling SOCS1 and SOCS3. In terms of biological role, (Microbial infection) Acts as a receptor for lassa virus and lymphocytic choriomeningitis virus, possibly through GAS6 binding to phosphatidyl-serine at the surface of virion envelope. (Microbial infection) Acts as a receptor for Ebolavirus, possibly through GAS6 binding to phosphatidyl-serine at the surface of virion envelope. This chain is Tyrosine-protein kinase receptor TYRO3 (TYRO3), found in Homo sapiens (Human).